Here is a 157-residue protein sequence, read N- to C-terminus: Transcription elongation factor GreA (157 aa).

A coiled-coil region spans residues Glu47 to Ala75.

This sequence belongs to the GreA/GreB family.

In terms of biological role, necessary for efficient RNA polymerase transcription elongation past template-encoded arresting sites. The arresting sites in DNA have the property of trapping a certain fraction of elongating RNA polymerases that pass through, resulting in locked ternary complexes. Cleavage of the nascent transcript by cleavage factors such as GreA or GreB allows the resumption of elongation from the new 3'terminus. GreA releases sequences of 2 to 3 nucleotides. This Mycoplasmopsis pulmonis (strain UAB CTIP) (Mycoplasma pulmonis) protein is Transcription elongation factor GreA.